The following is a 444-amino-acid chain: DNA primase DnaG (444 aa).

The Toprim domain maps to 173-250 (DAILIVEGRS…YVTRAPRGLE (78 aa)). Positions 179, 221, and 223 each coordinate Mg(2+). The disordered stretch occupies residues 302 to 354 (VTSSVNKTDKYSQKNESKQFKQQKNENKQVKDNSKEKTQKSTEKHNETEETHL). Positions 308 to 354 (KTDKYSQKNESKQFKQQKNENKQVKDNSKEKTQKSTEKHNETEETHL) are enriched in basic and acidic residues.

It belongs to the archaeal DnaG primase family. In terms of assembly, forms a ternary complex with MCM helicase and DNA. Component of the archaeal exosome complex. Mg(2+) serves as cofactor.

It carries out the reaction ssDNA + n NTP = ssDNA/pppN(pN)n-1 hybrid + (n-1) diphosphate.. RNA polymerase that catalyzes the synthesis of short RNA molecules used as primers for DNA polymerase during DNA replication. Also part of the exosome, which is a complex involved in RNA degradation. Acts as a poly(A)-binding protein that enhances the interaction between heteromeric, adenine-rich transcripts and the exosome. The chain is DNA primase DnaG from Methanosphaera stadtmanae (strain ATCC 43021 / DSM 3091 / JCM 11832 / MCB-3).